Consider the following 244-residue polypeptide: ATP synthase subunit a (244 aa).

A run of 7 helical transmembrane segments spans residues 20-40, 81-101, 113-133, 140-160, 176-196, 202-222, and 223-243; these read FFDI…VIVI, GILF…LNVM, QLLV…IWGF, FLNI…LVFI, LFAN…AAIY, FIGI…LGIA, and FLQA…IINL.

It belongs to the ATPase A chain family. F-type ATPases have 2 components, CF(1) - the catalytic core - and CF(0) - the membrane proton channel. CF(1) has five subunits: alpha(3), beta(3), gamma(1), delta(1), epsilon(1). CF(0) has three main subunits: a, b and c.

It is found in the mitochondrion inner membrane. Its function is as follows. Mitochondrial membrane ATP synthase (F(1)F(0) ATP synthase or Complex V) produces ATP from ADP in the presence of a proton gradient across the membrane which is generated by electron transport complexes of the respiratory chain. F-type ATPases consist of two structural domains, F(1) - containing the extramembraneous catalytic core and F(0) - containing the membrane proton channel, linked together by a central stalk and a peripheral stalk. During catalysis, ATP synthesis in the catalytic domain of F(1) is coupled via a rotary mechanism of the central stalk subunits to proton translocation. Key component of the proton channel; it may play a direct role in the translocation of protons across the membrane. The sequence is that of ATP synthase subunit a (atp6) from Dictyostelium discoideum (Social amoeba).